A 148-amino-acid chain; its full sequence is Succinate dehydrogenase assembly factor 3, mitochondrial (148 aa).

A mitochondrion-targeting transit peptide spans 1-12; it reads MYALRPTLRRSA. The segment at 129–148 is disordered; that stretch reads RGTEGDLEDGDGGESGQKSQ.

This sequence belongs to the complex I LYR family. SDHAF3 subfamily. In terms of assembly, interacts with the iron-sulfur protein subunit within the SDH catalytic dimer.

It is found in the mitochondrion matrix. Functionally, plays an essential role in the assembly of succinate dehydrogenase (SDH), an enzyme complex (also referred to as respiratory complex II) that is a component of both the tricarboxylic acid (TCA) cycle and the mitochondrial electron transport chain, and which couples the oxidation of succinate to fumarate with the reduction of ubiquinone (coenzyme Q) to ubiquinol. Promotes maturation of the iron-sulfur protein subunit of the SDH catalytic dimer, protecting it from the deleterious effects of oxidants. May act together with SDHAF1. The protein is Succinate dehydrogenase assembly factor 3, mitochondrial of Neurospora crassa (strain ATCC 24698 / 74-OR23-1A / CBS 708.71 / DSM 1257 / FGSC 987).